The sequence spans 284 residues: NADH-cytochrome b5 reductase 1 (284 aa).

The helical transmembrane segment at P8 to V28 threads the bilayer. In terms of domain architecture, FAD-binding FR-type spans D41–T144. Residues D124 to G139 and S150 to L182 each bind FAD.

Belongs to the flavoprotein pyridine nucleotide cytochrome reductase family. In terms of assembly, monomer. Component of the 2-(3-amino-3-carboxypropyl)histidine synthase complex composed of DPH1, DPH2, DPH3 and a NADH-dependent reductase, predominantly CBR1. Requires FAD as cofactor.

The protein localises to the mitochondrion outer membrane. It carries out the reaction 2 Fe(III)-[cytochrome b5] + NADH = 2 Fe(II)-[cytochrome b5] + NAD(+) + H(+). The catalysed reaction is 2 Fe(3+)-[Dph3] + NADH = 2 Fe(2+)-[Dph3] + NAD(+) + H(+). Its pathway is protein modification; peptidyl-diphthamide biosynthesis. NADH-dependent reductase for DPH3 and cytochrome b5. Required for the first step of diphthamide biosynthesis, a post-translational modification of histidine which occurs in elongation factor 2. DPH1 and DPH2 transfer a 3-amino-3-carboxypropyl (ACP) group from S-adenosyl-L-methionine (SAM) to a histidine residue, the reaction is assisted by a reduction system comprising DPH3 and a NADH-dependent reductase, predominantly CBR1. By reducing DPH3, also involved in the formation of the tRNA wobble base modification mcm5s 2U (5-methoxycarbonylmethyl-2-thiouridine), mediated by the elongator complex. The cytochrome b5/NADH cytochrome b5 reductase electron transfer system supports the catalytic activity of several sterol biosynthetic enzymes. The polypeptide is NADH-cytochrome b5 reductase 1 (CBR1) (Scheffersomyces stipitis (strain ATCC 58785 / CBS 6054 / NBRC 10063 / NRRL Y-11545) (Yeast)).